Reading from the N-terminus, the 757-residue chain is 5-methyltetrahydropteroyltriglutamate--homocysteine methyltransferase (757 aa).

5-methyltetrahydropteroyltri-L-glutamate contacts are provided by residues 16-19 (RELK) and lysine 112. L-homocysteine is bound by residues 432–434 (IGS) and glutamate 485. L-methionine is bound by residues 432–434 (IGS) and glutamate 485. Residues 516 to 517 (RC) and tryptophan 562 each bind 5-methyltetrahydropteroyltri-L-glutamate. Aspartate 600 lines the L-homocysteine pocket. An L-methionine-binding site is contributed by aspartate 600. Glutamate 606 is a binding site for 5-methyltetrahydropteroyltri-L-glutamate. Zn(2+) is bound by residues histidine 642, cysteine 644, and glutamate 666. Catalysis depends on histidine 695, which acts as the Proton donor. Cysteine 727 lines the Zn(2+) pocket.

Belongs to the vitamin-B12 independent methionine synthase family. Zn(2+) serves as cofactor.

The catalysed reaction is 5-methyltetrahydropteroyltri-L-glutamate + L-homocysteine = tetrahydropteroyltri-L-glutamate + L-methionine. Its pathway is amino-acid biosynthesis; L-methionine biosynthesis via de novo pathway; L-methionine from L-homocysteine (MetE route): step 1/1. Functionally, catalyzes the transfer of a methyl group from 5-methyltetrahydrofolate to homocysteine resulting in methionine formation. The polypeptide is 5-methyltetrahydropteroyltriglutamate--homocysteine methyltransferase (Actinobacillus pleuropneumoniae serotype 7 (strain AP76)).